The sequence spans 206 residues: Large ribosomal subunit protein mL62 (206 aa).

Residues 1–29 constitute a mitochondrion transit peptide; it reads MAATRCLRWGLSRAGVWLLPPPARCPRRA. At Q90 the chain carries N5-methylglutamine.

The protein belongs to the prokaryotic/mitochondrial release factor family. Mitochondrion-specific ribosomal protein mL62 subfamily. Component of the mitochondrial large ribosomal subunit (mt-LSU). Mature mammalian 55S mitochondrial ribosomes consist of a small (28S) and a large (39S) subunit. The 28S small subunit contains a 12S ribosomal RNA (12S mt-rRNA) and 30 different proteins. The 39S large subunit contains a 16S rRNA (16S mt-rRNA), a copy of mitochondrial valine transfer RNA (mt-tRNA(Val)), which plays an integral structural role, and 52 different proteins. In terms of processing, methylation of glutamine in the GGQ triplet by HEMK1. Down-regulated during the in vitro differentiation of HT29-D4 colon carcinoma cells.

It is found in the mitochondrion. The catalysed reaction is an N-acyl-L-alpha-aminoacyl-tRNA + H2O = an N-acyl-L-amino acid + a tRNA + H(+). Functionally, essential peptidyl-tRNA hydrolase component of the mitochondrial large ribosomal subunit. Acts as a codon-independent translation release factor that has lost all stop codon specificity and directs the termination of translation in mitochondrion, possibly in case of abortive elongation. Involved in the hydrolysis of peptidyl-tRNAs that have been prematurely terminated and thus in the recycling of stalled mitochondrial ribosomes. The protein is Large ribosomal subunit protein mL62 of Homo sapiens (Human).